A 519-amino-acid chain; its full sequence is T-complex protein 1 subunit gamma (519 aa).

It belongs to the TCP-1 chaperonin family. In terms of assembly, component of the T-complex protein 1 (TCP1) complex.

It localises to the cytoplasm. Functionally, molecular chaperone; assists the folding of proteins upon ATP hydrolysis. The protein is T-complex protein 1 subunit gamma (CCT3) of Encephalitozoon cuniculi (strain GB-M1) (Microsporidian parasite).